An 836-amino-acid chain; its full sequence is Subtilisin-like protease PIMMS2 (836 aa).

Residues Asp-155, His-222, and Ser-414 each act as charge relay system in the active site. A disordered region spans residues 802–836 (EKKNKYNNSVLKRNEMKSHNNSQKTPKIIPRKYSR).

This sequence belongs to the peptidase S8 family.

The protein resides in the cell membrane. The catalysed reaction is Hydrolysis of proteins with broad specificity for peptide bonds, and a preference for a large uncharged residue in P1. Hydrolyzes peptide amides.. In terms of biological role, probable serine protease which plays a role in ookinete traversal of the mosquito host midgut epithelium. This is Subtilisin-like protease PIMMS2 from Plasmodium berghei (strain Anka).